The following is a 37-amino-acid chain: Pi-theraphotoxin-Hm3a (37 aa).

Disulfide bonds link C3–C18, C10–C23, and C17–C33.

Belongs to the psalmotoxin-1 family. Expressed by the venom gland.

It localises to the secreted. In terms of biological role, this toxin acts on different isoforms of acid-sensing ion channel ASIC1 in a similar manner to psalmotoxin-1 (AC P60514). On ASIC1a homotrimer, it provokes a pH-dependent inhibition (IC(50)=39.7 nM on human and IC(50)=1.3 nM on rat channels), whereas it potentiates ASIC1b homotrimer and ASIC1a-ASIC1b heterotrimer (EC(50)=178.1 nM on human ASIC1b, EC(50)=46.5 nM on rat ASIC1b and EC(50)=17.4 nM on rat ASIC1a-ASIC1b channels). On rat ASIC1a, it acts by inhibiting channel currents by shifting the pH of half-maximal effect (pH(50)) of steady-state desensitization and activation to more alkaline values. This is Pi-theraphotoxin-Hm3a from Heteroscodra maculata (Togo starburst tarantula).